The chain runs to 862 residues: Autotaxin (862 aa).

An N-terminal signal peptide occupies residues 1-27 (MARQGCFGSYQVISLFTFAIGVNLCLG). Positions 28-35 (FTASRIKR) are cleaved as a propeptide — removed by furin. N-linked (GlcNAc...) asparagine glycosylation is present at N53. SMB domains follow at residues 54 to 97 (TSGS…LKTA) and 98 to 142 (RGWE…GESH). Intrachain disulfides connect C58-C75, C62-C93, C73-C86, C79-C85, C102-C119, C107-C137, C117-C130, C123-C129, C148-C194, and C156-C350. The Cell attachment site motif lies at 126 to 128 (RGD). The phosphodiesterase domain stretch occupies residues 144–501 (VDDDCEEIRV…PTFKYRTKVP (358 aa)). The Zn(2+) site is built by D171 and T209. The Nucleophile role is filled by T209. Residues T209, N230, and D311 each contribute to the 1-(9Z-octadecenoyl)-sn-glycero-3-phosphate site. T209, N230, and D311 together coordinate 1-hexadecanoyl-sn-glycero-3-phosphate. Positions 209, 230, and 311 each coordinate 1-tetradecanoyl-sn-glycerol 3-phosphate. Zn(2+)-binding residues include D311, H315, D358, and H359. 5 cysteine pairs are disulfide-bonded: C366/C468, C413/C805, C566/C666, C568/C651, and C774/C784. N410 carries N-linked (GlcNAc...) asparagine glycosylation. Position 474 (H474) interacts with Zn(2+). Residue H474 coordinates 1-(9Z-octadecenoyl)-sn-glycero-3-phosphate. H474 contributes to the 1-hexadecanoyl-sn-glycero-3-phosphate binding site. H474 lines the 1-tetradecanoyl-sn-glycerol 3-phosphate pocket. N-linked (GlcNAc...) asparagine glycosylation is present at N524. Positions 597 to 862 (LYGRPAVLYR…TYLHTYESEI (266 aa)) are nuclease-like domain. Ca(2+)-binding residues include D739, N741, N743, L745, and D747. N-linked (GlcNAc...) asparagine glycosylation occurs at N806. The tract at residues 829 to 850 (IEHLTGLDFYRKTSRSYSEILT) is required for secretion.

This sequence belongs to the nucleotide pyrophosphatase/phosphodiesterase family. Zn(2+) serves as cofactor. It depends on Ca(2+) as a cofactor. N-glycosylation, but not furin-cleavage, plays a critical role on secretion and on lysoPLD activity. Secretion requires simultaneous glycosylation on Asn-53 and Asn-410, while probable glycosylation of Asn-410 has a preferential role on lysoPLD activity. Not O-glycosylated. Post-translationally, the interdomain disulfide bond between Cys-413 and Cys-805 is essential for catalytic activity. As to expression, expressed in brain and adipose tissue.

The protein localises to the secreted. It carries out the reaction a 1-O-alkyl-sn-glycero-3-phosphoethanolamine + H2O = a 1-O-alkyl-sn-glycero-3-phosphate + ethanolamine + H(+). It catalyses the reaction a 1-acyl-sn-glycero-3-phosphoethanolamine + H2O = a 1-acyl-sn-glycero-3-phosphate + ethanolamine + H(+). The enzyme catalyses 1-(9Z-octadecenoyl)-sn-glycero-3-phosphoethanolamine + H2O = 1-(9Z-octadecenoyl)-sn-glycero-3-phosphate + ethanolamine + H(+). The catalysed reaction is a 1-O-alkyl-sn-glycero-3-phosphocholine + H2O = a 1-O-alkyl-sn-glycero-3-phosphate + choline + H(+). It carries out the reaction 1-O-(9Z-octadecenyl)-sn-glycero-3-phosphocholine + H2O = 1-O-(9Z-octadecenyl)-sn-glycero-3-phosphate + choline + H(+). It catalyses the reaction 1-O-hexadecyl-sn-glycero-3-phosphocholine + H2O = 1-O-hexadecyl-sn-glycero-3-phosphate + choline + H(+). The enzyme catalyses a 1-O-(1Z-alkenyl)-sn-glycero-3-phosphocholine + H2O = a 1-O-(1Z-alkenyl)-sn-glycero-3-phosphate + choline + H(+). The catalysed reaction is a 1-acyl-sn-glycero-3-phosphocholine + H2O = a 1-acyl-sn-glycero-3-phosphate + choline + H(+). It carries out the reaction 1-dodecanoyl-sn-glycero-3-phosphocholine + H2O = 1-dodecanoyl-sn-glycerol 3-phosphate + choline + H(+). It catalyses the reaction 1-(9Z-octadecenoyl)-sn-glycero-3-phosphocholine + H2O = 1-(9Z-octadecenoyl)-sn-glycero-3-phosphate + choline + H(+). The enzyme catalyses 1-tetradecanoyl-sn-glycero-3-phosphocholine + H2O = 1-tetradecanoyl-sn-glycerol 3-phosphate + choline + H(+). The catalysed reaction is 1-decanoyl-sn-glycero-3-phosphocholine + H2O = 1-decanoyl-sn-glycero-3-phosphate + choline + H(+). It carries out the reaction 1-octadecanoyl-sn-glycero-3-phosphocholine + H2O = 1-octadecanoyl-sn-glycero-3-phosphate + choline + H(+). It catalyses the reaction 1-hexadecanoyl-sn-glycero-3-phosphocholine + H2O = 1-hexadecanoyl-sn-glycero-3-phosphate + choline + H(+). The enzyme catalyses 1-hexanoyl-sn-glycero-3-phosphocholine + H2O = 1-hexanoyl-sn-glycero-3-phosphate + choline + H(+). The catalysed reaction is 1-(9Z,12Z)-octadecadienoyl-sn-glycero-3-phosphocholine + H2O = 1-(9Z,12Z)-octadecadienoyl-sn-glycero-3-phosphate + choline + H(+). It carries out the reaction sphing-4-enine-phosphocholine + H2O = sphing-4-enine 1-phosphate + choline + H(+). It catalyses the reaction 1-(5Z,8Z,11Z,14Z-eicosatetraenoyl)-sn-glycero-3-phosphocholine + H2O = 1-(5Z,8Z,11Z,14Z-eicosatetraenoyl)-sn-glycero-3-phosphate + choline + H(+). The enzyme catalyses a 2-acyl-sn-glycero-3-phosphocholine + H2O = a 2-acyl-sn-glycerol 3-phosphate + choline + H(+). The catalysed reaction is a 1,2-diacyl-sn-glycero-3-phosphocholine + H2O = a 1,2-diacyl-sn-glycero-3-phosphate + choline + H(+). It carries out the reaction 1,2-dioctanoyl-sn-glycero-3-phosphocholine + H2O = 1,2-dioctanoyl-sn-glycero-3-phosphate + choline + H(+). It catalyses the reaction 1,2-didecanoyl-sn-glycero-3-phosphocholine + H2O = 1,2-didecanoyl-sn-glycero-3-phosphate + choline + H(+). The enzyme catalyses a 1-acyl-sn-glycero-3-phospho-L-serine + H2O = a 1-acyl-sn-glycero-3-phosphate + L-serine + H(+). The catalysed reaction is 1-(9Z-octadecenoyl)-sn-glycero-3-phospho-L-serine + H2O = 1-(9Z-octadecenoyl)-sn-glycero-3-phosphate + L-serine + H(+). It carries out the reaction a 2-acyl-sn-glycero-3-phospho-L-serine + H2O = a 2-acyl-sn-glycerol 3-phosphate + L-serine + H(+). With respect to regulation, inhibited by EDTA and EGTA. Its function is as follows. Secreted lysophospholipase D that hydrolyzes lysophospholipids to produce the signaling molecule lysophosphatidic acid (LPA) in extracellular fluids. Its major substrate is lysophosphatidylcholine. Can also act on sphingosylphosphorylcholine producing sphingosine-1-phosphate, a modulator of cell motility. Can hydrolyze, in vitro, bis-pNPP, to some extent pNP-TMP, and barely ATP. Involved in several motility-related processes such as angiogenesis and neurite outgrowth. Acts as an angiogenic factor by stimulating migration of smooth muscle cells and microtubule formation. Stimulates migration of melanoma cells, probably via a pertussis toxin-sensitive G protein. May have a role in induction of parturition. Possible involvement in cell proliferation and adipose tissue development. Required for LPA production in activated platelets, cleaves the sn-1 lysophospholipids to generate sn-1 lysophosphatidic acids containing predominantly 18:2 and 20:4 fatty acids. Shows a preference for the sn-1 to the sn-2 isomer of 1-O-alkyl-sn-glycero-3-phosphocholine (lyso-PAF). In Mus musculus (Mouse), this protein is Autotaxin.